Here is a 362-residue protein sequence, read N- to C-terminus: Phosphoserine aminotransferase (362 aa).

Serine 9 and arginine 42 together coordinate L-glutamate. Residues 76–77, tryptophan 102, threonine 153, aspartate 174, and glutamine 197 each bind pyridoxal 5'-phosphate; that span reads GR. Lysine 198 is subject to N6-(pyridoxal phosphate)lysine. 239 to 240 serves as a coordination point for pyridoxal 5'-phosphate; it reads NT.

This sequence belongs to the class-V pyridoxal-phosphate-dependent aminotransferase family. SerC subfamily. In terms of assembly, homodimer. Pyridoxal 5'-phosphate serves as cofactor.

The protein localises to the cytoplasm. It carries out the reaction O-phospho-L-serine + 2-oxoglutarate = 3-phosphooxypyruvate + L-glutamate. The catalysed reaction is 4-(phosphooxy)-L-threonine + 2-oxoglutarate = (R)-3-hydroxy-2-oxo-4-phosphooxybutanoate + L-glutamate. Its pathway is amino-acid biosynthesis; L-serine biosynthesis; L-serine from 3-phospho-D-glycerate: step 2/3. It participates in cofactor biosynthesis; pyridoxine 5'-phosphate biosynthesis; pyridoxine 5'-phosphate from D-erythrose 4-phosphate: step 3/5. Its function is as follows. Catalyzes the reversible conversion of 3-phosphohydroxypyruvate to phosphoserine and of 3-hydroxy-2-oxo-4-phosphonooxybutanoate to phosphohydroxythreonine. The protein is Phosphoserine aminotransferase of Escherichia coli O17:K52:H18 (strain UMN026 / ExPEC).